We begin with the raw amino-acid sequence, 122 residues long: uncharacterized protein (122 aa).

The next 2 membrane-spanning stretches (helical) occupy residues Ser-36–Phe-56 and Ala-72–Asp-92.

It is found in the membrane. This is an uncharacterized protein from Saccharomyces cerevisiae (strain ATCC 204508 / S288c) (Baker's yeast).